A 174-amino-acid chain; its full sequence is Achaete-scute homolog 3 (174 aa).

The basic motif stretch occupies residues 92 to 105; the sequence is AFIRKRNERERQRV. One can recognise a bHLH domain in the interval 92–144; the sequence is AFIRKRNERERQRVKCVNEGYARLRRHLPEDYLEKRLSKVETLRAAIKYISYL. Positions 106 to 144 are helix-loop-helix motif; sequence KCVNEGYARLRRHLPEDYLEKRLSKVETLRAAIKYISYL. Residues 153–174 form a disordered region; it reads SETKKNPRTASCGSLDPALRVI.

Efficient DNA binding requires dimerization with another bHLH protein. Expressed in the salivary duct cells. Also expressed at lower levels in testis and epididymis. Expressed in the olfactory epithelium (OE), in a subset of apical microvillar cells.

It is found in the nucleus. Transcriptional repressor. Inhibits myogenesis. Plays a role in progenitor cells which differentiate into ductal and acinar, but not myoepithelial, cell lineages in the salivary glands. Involved in the functions of the microvillar cells and Bowman's glands and probably, in a non-cell-autonomous manner, in the development or regeneration of a complete olfactory epithelium (OE). The sequence is that of Achaete-scute homolog 3 (Ascl3) from Mus musculus (Mouse).